The following is a 331-amino-acid chain: ADP,ATP carrier protein 2, mitochondrial (331 aa).

Solcar repeat units lie at residues 29-122, 134-226, and 238-320; these read KNFA…FKRM, KWFG…LKPV, and ASFA…LQIL. A run of 5 helical transmembrane segments spans residues 31 to 58, 99 to 123, 132 to 152, 202 to 223, and 237 to 257; these read FAID…VKLL, TANV…KRMF, YWKW…SSLF, FNIS…YDSL, and FASF…SYPI. ADP-binding residues include arginine 104 and lysine 116. Arginine 261 contributes to the ADP binding site. Residues 261–266 form an important for transport activity region; sequence RRRMMM. The short motif at 261 to 266 is the Nucleotide carrier signature motif element; it reads RRRMMM. The chain crosses the membrane as a helical span at residues 297-317; the sequence is AGANILRAIAGAGVLSGYDQL.

Belongs to the mitochondrial carrier (TC 2.A.29) family. Monomer.

The protein resides in the mitochondrion inner membrane. The catalysed reaction is ADP(in) + ATP(out) = ADP(out) + ATP(in). The matrix-open state (m-state) is inhibited by the membrane-permeable bongkrekic acid (BKA). The cytoplasmic-open state (c-state) is inhibited by the membrane-impermeable toxic inhibitor carboxyatractyloside (CATR). In terms of biological role, ADP:ATP antiporter that mediates import of ADP into the mitochondrial matrix for ATP synthesis, and export of ATP out to fuel the cell. Cycles between the cytoplasmic-open state (c-state) and the matrix-open state (m-state): operates by the alternating access mechanism with a single substrate-binding site intermittently exposed to either the cytosolic (c-state) or matrix (m-state) side of the inner mitochondrial membrane. The chain is ADP,ATP carrier protein 2, mitochondrial (ANT-G2) from Triticum aestivum (Wheat).